The sequence spans 925 residues: ETO1-like protein 2 (925 aa).

The BTB domain maps to 207 to 307 (SDISFCVGSE…ECEARLAASV (101 aa)). The TPR 1 repeat unit spans residues 409-442 (ALSLHQMGCVLFERKDYKAAQFHFRLASSLGHVY). Residues 509–533 (KYRAVMKFEQKQIKEAFQEIDRLIQ) adopt a coiled-coil conformation. 6 TPR repeats span residues 538–571 (PECLELRAWLYLATGDRESCLRDLRAVLSLEPNY), 664–697 (AERLVYEGWLLYDMGYVEETLTKAEEAISIQRSF), 738–771 (GQALNNLGSIYINLGMLDQAETAYKNAIEIKHIR), 773–803 (RQGLARVYFLKNQRKEACEEMTKLIEKSCSK), 834–867 (TYPYRYRAAVLMDDQRETEAVEELSKAIAFRPEL), and 869–900 (TLHLRAAFHEATGNLSLATQDCEAALCLDPNH).

The protein belongs to the ETO1 family. Interacts with the C-terminal domain of ACS5. As to expression, constitutively expressed in green and etiolated seedlings.

Its pathway is protein modification; protein ubiquitination. Its function is as follows. Potential regulator of the ethylene pathway, which acts by regulating the stability of 1-aminocyclopropane-1-carboxylate synthase (ACS) enzymes. May act as a substrate-specific adapter that connects ACS enzymes, such as ACS5, to ubiquitin ligase complexes, leading to proteasomal degradation of ACS enzymes. This chain is ETO1-like protein 2 (EOL2), found in Arabidopsis thaliana (Mouse-ear cress).